Reading from the N-terminus, the 152-residue chain is Large ribosomal subunit protein uL13 (152 aa).

This sequence belongs to the universal ribosomal protein uL13 family. As to quaternary structure, part of the 50S ribosomal subunit.

This protein is one of the early assembly proteins of the 50S ribosomal subunit, although it is not seen to bind rRNA by itself. It is important during the early stages of 50S assembly. The protein is Large ribosomal subunit protein uL13 of Wolbachia sp. subsp. Drosophila simulans (strain wRi).